A 318-amino-acid polypeptide reads, in one-letter code: Nuclear egress protein 1 (318 aa).

A CCCH-type zinc finger spans residues cysteine 129 to histidine 239.

It belongs to the herpesviridae NEC1 protein family. In terms of assembly, forms a heterodimeric viral nuclear egress complex (NEC) with NEC2. Interacts with capsid vertex specific component 2/CVC2; this interaction directs the capsid to the host inner nuclear membrane to initiate budding. Post-translationally, phosphorylated at serine residues in the N-terminus. This phosphorylation regulates the localization within the inner nuclear membrane.

The protein localises to the host nucleus inner membrane. Its function is as follows. Plays an essential role in virion nuclear egress, the first step of virion release from infected cell. Within the host nucleus, NEC1 interacts with the newly formed capsid through the vertexes and directs it to the inner nuclear membrane by associating with NEC2. Induces the budding of the capsid at the inner nuclear membrane as well as its envelopment into the perinuclear space. There, the NEC1/NEC2 complex promotes the fusion of the enveloped capsid with the outer nuclear membrane and the subsequent release of the viral capsid into the cytoplasm where it will reach the secondary budding sites in the host Golgi or trans-Golgi network. The protein is Nuclear egress protein 1 of Homo sapiens (Human).